We begin with the raw amino-acid sequence, 128 residues long: CD59 glycoprotein (128 aa).

The first 25 residues, 1–25 (MGIQGGSVLFGLLLVLAVFCHSGHS), serve as a signal peptide directing secretion. The UPAR/Ly6 domain occupies 26-108 (LQCYNCPNPT…QLENGGTSLS (83 aa)). Disulfide bonds link cysteine 28-cysteine 51, cysteine 31-cysteine 38, cysteine 44-cysteine 64, cysteine 70-cysteine 88, and cysteine 89-cysteine 94. An N-linked (GlcNAc...) asparagine glycan is attached at asparagine 43. A lipid anchor (GPI-anchor amidated asparagine) is attached at asparagine 102. Positions 103–128 (GGTSLSEKTVVLLVTLLLAAAWCLHP) are cleaved as a propeptide — removed in mature form.

As to quaternary structure, interacts with T-cell surface antigen CD2. Post-translationally, N- and O-glycosylated.

Its subcellular location is the cell membrane. It localises to the secreted. Its function is as follows. Potent inhibitor of the complement membrane attack complex (MAC) action, which protects self-cells from damage during complement activation. Acts by binding to the beta-haipins of C8 (C8A and C8B) components of the assembling MAC, forming an intermolecular beta-sheet that prevents incorporation of the multiple copies of C9 required for complete formation of the osmolytic pore. This is CD59 glycoprotein from Chlorocebus aethiops (Green monkey).